The following is a 366-amino-acid chain: UDP-N-acetylglucosamine--N-acetylmuramyl-(pentapeptide) pyrophosphoryl-undecaprenol N-acetylglucosamine transferase (366 aa).

Residues 10 to 12, asparagine 124, arginine 166, serine 196, and glutamine 296 contribute to the UDP-N-acetyl-alpha-D-glucosamine site; that span reads TGG.

This sequence belongs to the glycosyltransferase 28 family. MurG subfamily.

Its subcellular location is the cell membrane. It catalyses the reaction di-trans,octa-cis-undecaprenyl diphospho-N-acetyl-alpha-D-muramoyl-L-alanyl-D-glutamyl-meso-2,6-diaminopimeloyl-D-alanyl-D-alanine + UDP-N-acetyl-alpha-D-glucosamine = di-trans,octa-cis-undecaprenyl diphospho-[N-acetyl-alpha-D-glucosaminyl-(1-&gt;4)]-N-acetyl-alpha-D-muramoyl-L-alanyl-D-glutamyl-meso-2,6-diaminopimeloyl-D-alanyl-D-alanine + UDP + H(+). Its pathway is cell wall biogenesis; peptidoglycan biosynthesis. In terms of biological role, cell wall formation. Catalyzes the transfer of a GlcNAc subunit on undecaprenyl-pyrophosphoryl-MurNAc-pentapeptide (lipid intermediate I) to form undecaprenyl-pyrophosphoryl-MurNAc-(pentapeptide)GlcNAc (lipid intermediate II). The polypeptide is UDP-N-acetylglucosamine--N-acetylmuramyl-(pentapeptide) pyrophosphoryl-undecaprenol N-acetylglucosamine transferase (Alkaliphilus oremlandii (strain OhILAs) (Clostridium oremlandii (strain OhILAs))).